The sequence spans 123 residues: UPF0102 protein PputGB1_4524 (123 aa).

This sequence belongs to the UPF0102 family.

The protein is UPF0102 protein PputGB1_4524 of Pseudomonas putida (strain GB-1).